The sequence spans 484 residues: Glutamyl-tRNA(Gln) amidotransferase subunit A (484 aa).

Active-site charge relay system residues include K77 and S152. The Acyl-ester intermediate role is filled by S176.

It belongs to the amidase family. GatA subfamily. In terms of assembly, heterotrimer of A, B and C subunits.

The enzyme catalyses L-glutamyl-tRNA(Gln) + L-glutamine + ATP + H2O = L-glutaminyl-tRNA(Gln) + L-glutamate + ADP + phosphate + H(+). Allows the formation of correctly charged Gln-tRNA(Gln) through the transamidation of misacylated Glu-tRNA(Gln) in organisms which lack glutaminyl-tRNA synthetase. The reaction takes place in the presence of glutamine and ATP through an activated gamma-phospho-Glu-tRNA(Gln). This is Glutamyl-tRNA(Gln) amidotransferase subunit A from Lacticaseibacillus casei (strain BL23) (Lactobacillus casei).